A 71-amino-acid polypeptide reads, in one-letter code: Translation initiation factor IF-1 (71 aa).

Residues 1-71 form the S1-like domain; it reads MSKDDLIQFT…LTKGRVIHRH (71 aa).

Belongs to the IF-1 family. Component of the 30S ribosomal translation pre-initiation complex which assembles on the 30S ribosome in the order IF-2 and IF-3, IF-1 and N-formylmethionyl-tRNA(fMet); mRNA recruitment can occur at any time during PIC assembly.

It is found in the cytoplasm. In terms of biological role, one of the essential components for the initiation of protein synthesis. Stabilizes the binding of IF-2 and IF-3 on the 30S subunit to which N-formylmethionyl-tRNA(fMet) subsequently binds. Helps modulate mRNA selection, yielding the 30S pre-initiation complex (PIC). Upon addition of the 50S ribosomal subunit IF-1, IF-2 and IF-3 are released leaving the mature 70S translation initiation complex. This is Translation initiation factor IF-1 from Rickettsia felis (strain ATCC VR-1525 / URRWXCal2) (Rickettsia azadi).